A 361-amino-acid polypeptide reads, in one-letter code: Aromatic amino acid aminotransferase (361 aa).

At Lys-215 the chain carries N6-(pyridoxal phosphate)lysine.

This sequence belongs to the class-II pyridoxal-phosphate-dependent aminotransferase family. In terms of assembly, homodimer. It depends on pyridoxal 5'-phosphate as a cofactor.

The enzyme catalyses an aromatic L-alpha-amino acid + 2-oxoglutarate = an aromatic oxo-acid + L-glutamate. Its function is as follows. Aminotransferase that catalyzes the conversion of aromatic amino acids and 2-oxoglutarate into corresponding aromatic oxo acids and L-glutamate. The chain is Aromatic amino acid aminotransferase from Mycolicibacterium smegmatis (strain ATCC 700084 / mc(2)155) (Mycobacterium smegmatis).